A 130-amino-acid polypeptide reads, in one-letter code: Small ribosomal subunit protein uS8 (130 aa).

This sequence belongs to the universal ribosomal protein uS8 family. As to quaternary structure, part of the 30S ribosomal subunit.

Functionally, one of the primary rRNA binding proteins, it binds directly to 16S rRNA central domain where it helps coordinate assembly of the platform of the 30S subunit. This Methanosarcina barkeri (strain Fusaro / DSM 804) protein is Small ribosomal subunit protein uS8.